The following is an 852-amino-acid chain: DNA mismatch repair protein MutS (852 aa).

An ATP-binding site is contributed by G602 to S609.

This sequence belongs to the DNA mismatch repair MutS family.

In terms of biological role, this protein is involved in the repair of mismatches in DNA. It is possible that it carries out the mismatch recognition step. This protein has a weak ATPase activity. The chain is DNA mismatch repair protein MutS from Streptococcus thermophilus (strain ATCC BAA-491 / LMD-9).